A 303-amino-acid chain; its full sequence is UDP-N-acetylenolpyruvoylglucosamine reductase (303 aa).

The 166-residue stretch at 30 to 195 folds into the FAD-binding PCMH-type domain; the sequence is KTGGPADLLA…LSARFEMAKG (166 aa). Arginine 174 is a catalytic residue. Catalysis depends on serine 224, which acts as the Proton donor. Glutamate 294 is a catalytic residue.

Belongs to the MurB family. The cofactor is FAD.

The protein localises to the cytoplasm. It carries out the reaction UDP-N-acetyl-alpha-D-muramate + NADP(+) = UDP-N-acetyl-3-O-(1-carboxyvinyl)-alpha-D-glucosamine + NADPH + H(+). It participates in cell wall biogenesis; peptidoglycan biosynthesis. Its function is as follows. Cell wall formation. The chain is UDP-N-acetylenolpyruvoylglucosamine reductase from Latilactobacillus sakei subsp. sakei (strain 23K) (Lactobacillus sakei subsp. sakei).